The primary structure comprises 298 residues: Protein RKD2 (298 aa).

2 stretches are compositionally biased toward basic and acidic residues: residues 1–10 and 81–102; these read MADHTTKEQK and EQNRGDGASSEKKRENGTVKET. Disordered regions lie at residues 1 to 22 and 73 to 112; these read MADHTTKEQKSFSFLAHSPSFD and SSASWNETEQNRGDGASSEKKRENGTVKETTKKRKINERH. The 83-residue stretch at 121–203 folds into the RWP-RK domain; it reads SDITTYTTSS…KMEGEENAEK (83 aa). Residues 188 to 222 are a coiled coil; it reads NVKELQKMEGEENAEKLQDALEMLEKEKRTIEDLP. The tract at residues 241–279 is disordered; sequence NHKRKKKRSLKSDQSQVPSCSSSGSVPSDESVDEAGMES. Over residues 252–269 the composition is skewed to low complexity; the sequence is SDQSQVPSCSSSGSVPSD. The segment covering 270 to 279 has biased composition (acidic residues); that stretch reads ESVDEAGMES.

Its subcellular location is the nucleus. In terms of biological role, putative transcription factor. This Arabidopsis thaliana (Mouse-ear cress) protein is Protein RKD2 (RKD2).